A 377-amino-acid chain; its full sequence is uncharacterized protein (377 aa).

The segment at 1–25 (MAQQTNVAGQKTEKQRKAPFRADHV) is disordered. The segment covering 11–24 (KTEKQRKAPFRADH) has biased composition (basic and acidic residues).

This sequence to B.subtilis YxjG.

This is an uncharacterized protein from Bacillus subtilis (strain 168).